A 2485-amino-acid polypeptide reads, in one-letter code: Probable polyketide synthase 10 (2485 aa).

Residues Glu-8–Glu-447 form the Ketosynthase family 3 (KS3) domain. Residues Cys-184, His-325, and His-363 each act as for beta-ketoacyl synthase activity in the active site. The acyl/malonyl transferase stretch occupies residues Gly-636–Tyr-669. Ser-646 acts as the For acyl/malonyl transferase activity in catalysis. The interval Pro-930 to Phe-1054 is N-terminal hotdog fold. In terms of domain architecture, PKS/mFAS DH spans Pro-930–Pro-1220. His-964 acts as the Proton acceptor; for dehydratase activity in catalysis. The interval Asn-1071–Pro-1220 is C-terminal hotdog fold. Asp-1134 (proton donor; for dehydratase activity) is an active-site residue. In terms of domain architecture, Carrier spans Glu-2410 to Lys-2485. Ser-2447 carries the post-translational modification O-(pantetheine 4'-phosphoryl)serine.

Requires pantetheine 4'-phosphate as cofactor.

Probable polyketide synthase. The polypeptide is Probable polyketide synthase 10 (pks10) (Dictyostelium discoideum (Social amoeba)).